The following is a 128-amino-acid chain: Fluoride-specific ion channel FluC (128 aa).

4 consecutive transmembrane segments (helical) span residues 4-24 (LLLV…VGVQ), 37-57 (TFIV…WLAL), 72-92 (VGVM…ALMI), and 101-121 (FTYT…GLLI). Na(+)-binding residues include Gly76 and Thr79.

It belongs to the fluoride channel Fluc/FEX (TC 1.A.43) family.

It is found in the cell inner membrane. It catalyses the reaction fluoride(in) = fluoride(out). With respect to regulation, na(+) is not transported, but it plays an essential structural role and its presence is essential for fluoride channel function. In terms of biological role, fluoride-specific ion channel. Important for reducing fluoride concentration in the cell, thus reducing its toxicity. The sequence is that of Fluoride-specific ion channel FluC from Caulobacter sp. (strain K31).